We begin with the raw amino-acid sequence, 494 residues long: Aspartyl/glutamyl-tRNA(Asn/Gln) amidotransferase subunit B (494 aa).

It belongs to the GatB/GatE family. GatB subfamily. As to quaternary structure, heterotrimer of A, B and C subunits.

The catalysed reaction is L-glutamyl-tRNA(Gln) + L-glutamine + ATP + H2O = L-glutaminyl-tRNA(Gln) + L-glutamate + ADP + phosphate + H(+). It carries out the reaction L-aspartyl-tRNA(Asn) + L-glutamine + ATP + H2O = L-asparaginyl-tRNA(Asn) + L-glutamate + ADP + phosphate + 2 H(+). Functionally, allows the formation of correctly charged Asn-tRNA(Asn) or Gln-tRNA(Gln) through the transamidation of misacylated Asp-tRNA(Asn) or Glu-tRNA(Gln) in organisms which lack either or both of asparaginyl-tRNA or glutaminyl-tRNA synthetases. The reaction takes place in the presence of glutamine and ATP through an activated phospho-Asp-tRNA(Asn) or phospho-Glu-tRNA(Gln). This is Aspartyl/glutamyl-tRNA(Asn/Gln) amidotransferase subunit B from Rhodopseudomonas palustris (strain BisB5).